The chain runs to 540 residues: 2,3-bisphosphoglycerate-independent phosphoglycerate mutase (540 aa).

Mn(2+) contacts are provided by D13 and S63. S63 functions as the Phosphoserine intermediate in the catalytic mechanism. Residues H124, 154 to 155 (RD), R186, R192, 262 to 265 (RPDR), and K356 each bind substrate. Positions 423, 427, 464, 465, and 483 each coordinate Mn(2+).

It belongs to the BPG-independent phosphoglycerate mutase family. As to quaternary structure, monomer. Mn(2+) is required as a cofactor.

It catalyses the reaction (2R)-2-phosphoglycerate = (2R)-3-phosphoglycerate. Its pathway is carbohydrate degradation; glycolysis; pyruvate from D-glyceraldehyde 3-phosphate: step 3/5. In terms of biological role, catalyzes the interconversion of 2-phosphoglycerate and 3-phosphoglycerate. The sequence is that of 2,3-bisphosphoglycerate-independent phosphoglycerate mutase from Chloroflexus aggregans (strain MD-66 / DSM 9485).